The following is a 346-amino-acid chain: Phosphoribosylformylglycinamidine cyclo-ligase (346 aa).

The protein belongs to the AIR synthase family.

The protein resides in the cytoplasm. It catalyses the reaction 2-formamido-N(1)-(5-O-phospho-beta-D-ribosyl)acetamidine + ATP = 5-amino-1-(5-phospho-beta-D-ribosyl)imidazole + ADP + phosphate + H(+). The protein operates within purine metabolism; IMP biosynthesis via de novo pathway; 5-amino-1-(5-phospho-D-ribosyl)imidazole from N(2)-formyl-N(1)-(5-phospho-D-ribosyl)glycinamide: step 2/2. This Methylobacillus flagellatus (strain ATCC 51484 / DSM 6875 / VKM B-1610 / KT) protein is Phosphoribosylformylglycinamidine cyclo-ligase.